Here is a 167-residue protein sequence, read N- to C-terminus: Ubiquitin-conjugating enzyme E2 2 (167 aa).

The UBC core domain maps to 4–150 (PARRRLMRDF…VKETVEKSWE (147 aa)). C88 acts as the Glycyl thioester intermediate in catalysis. A disordered region spans residues 148–167 (SWEDNMDDMDDSDEDDEDDE). Over residues 151 to 167 (DNMDDMDDSDEDDEDDE) the composition is skewed to acidic residues.

The protein belongs to the ubiquitin-conjugating enzyme family.

It localises to the cytoplasm. It is found in the nucleus. It catalyses the reaction S-ubiquitinyl-[E1 ubiquitin-activating enzyme]-L-cysteine + [E2 ubiquitin-conjugating enzyme]-L-cysteine = [E1 ubiquitin-activating enzyme]-L-cysteine + S-ubiquitinyl-[E2 ubiquitin-conjugating enzyme]-L-cysteine.. It participates in protein modification; protein ubiquitination. Functionally, catalyzes the covalent attachment of ubiquitin to other proteins. Plays a role in transcription regulation by catalyzing the monoubiquitination of histone H2B to form H2BK123ub1. H2BK123ub1 gives a specific tag for epigenetic transcriptional activation and is also a prerequisite for H3K4me and H3K79me formation. Also involved in postreplication repair of UV-damaged DNA, in N-end rule-dependent protein degradation and in sporulation. In Candida glabrata (strain ATCC 2001 / BCRC 20586 / JCM 3761 / NBRC 0622 / NRRL Y-65 / CBS 138) (Yeast), this protein is Ubiquitin-conjugating enzyme E2 2 (UBC2).